Consider the following 523-residue polypeptide: Glycerate kinase (523 aa).

A Phosphoserine modification is found at serine 60. The residue at position 200 (lysine 200) is an N6-acetyllysine.

The protein belongs to the glycerate kinase type-2 family.

The protein localises to the cytoplasm. The catalysed reaction is (R)-glycerate + ATP = (2R)-3-phosphoglycerate + ADP + H(+). This chain is Glycerate kinase (Glyctk), found in Rattus norvegicus (Rat).